A 170-amino-acid polypeptide reads, in one-letter code: Histone H1.9 (170 aa).

The 75-residue stretch at 34–108 (RKPTMSYVIL…GASGSLCLCK (75 aa)) folds into the H15 domain. Serine 56 is subject to Phosphoserine. The interval 118–140 (AKRCQDRQKSQKPQKPGQRESEP) is disordered.

The protein belongs to the histone H1/H5 family. As to expression, expressed exclusively in the testis by haploid germ cells (at protein level).

It is found in the nucleus. It localises to the chromosome. Its function is as follows. DNA-binding protein that may be implicated in chromatin remodeling and/or transcriptional regulation during spermiogenesis, the process of spermatid maturation into spermatozoa. This chain is Histone H1.9, found in Mus musculus (Mouse).